Reading from the N-terminus, the 119-residue chain is Large ribosomal subunit protein bL20 (119 aa).

This sequence belongs to the bacterial ribosomal protein bL20 family.

Its function is as follows. Binds directly to 23S ribosomal RNA and is necessary for the in vitro assembly process of the 50S ribosomal subunit. It is not involved in the protein synthesizing functions of that subunit. The protein is Large ribosomal subunit protein bL20 of Thiobacillus denitrificans (strain ATCC 25259 / T1).